Consider the following 441-residue polypeptide: Glutamate--tRNA ligase 2 (441 aa).

Residues Pro8–Asn18 carry the 'HIGH' region motif. Residues Ala239–Arg243 carry the 'KMSKS' region motif. An ATP-binding site is contributed by Lys242.

The protein belongs to the class-I aminoacyl-tRNA synthetase family. Glutamate--tRNA ligase type 1 subfamily. In terms of assembly, monomer.

The protein localises to the cytoplasm. It catalyses the reaction tRNA(Glu) + L-glutamate + ATP = L-glutamyl-tRNA(Glu) + AMP + diphosphate. Catalyzes the attachment of glutamate to tRNA(Glu) in a two-step reaction: glutamate is first activated by ATP to form Glu-AMP and then transferred to the acceptor end of tRNA(Glu). This is Glutamate--tRNA ligase 2 from Ruegeria sp. (strain TM1040) (Silicibacter sp.).